The primary structure comprises 139 residues: GSK3B-interacting protein (139 aa).

Positions 41-45 (VNDVL) are required for PRKAR2A interaction; contributes to a protective effect against H(2)O(2)-induced apoptosis. The segment at 115–139 (SPAYREAFGNALLQRLEALKRDGQS) is interaction with GSK3B and acts as a GSK3B inhibitor.

The protein belongs to the GSKIP family. As to quaternary structure, forms a complex composed of PRKAR2A or PRKAR2B, GSK3B and GSKIP through GSKIP interaction; facilitates PKA-induced phosphorylation of GSK3B leading to GSK3B inactivation; recruits DNM1L through GSK3B for PKA-mediated phosphorylation of DNM1L; promotes beta-catenin degradation through GSK3B-induced phosphorylation of beta-catenin; stabilizes beta-catenin and enhances Wnt-induced signaling through PKA-induced phosphorylation of beta-catenin. Interacts with GSK3B; induces GSK3B-mediated phosphorylation of GSKIP and inhibits GSK3B kinase activity. Post-translationally, phosphorylated by GSK3B.

The protein resides in the cytoplasm. It localises to the nucleus. A-kinase anchoring protein for GSK3B and PKA that regulates or facilitates their kinase activity towards their targets. The ternary complex enhances Wnt-induced signaling by facilitating the GSK3B- and PKA-induced phosphorylation of beta-catenin leading to beta-catenin degradation and stabilization respectively. Upon cAMP activation, the ternary complex contributes to neuroprotection against oxidative stress-induced apoptosis by facilitating the PKA-induced phosphorylation of DML1 and PKA-induced inactivation of GSK3B. During neurite outgrowth promotes neuron proliferation; while increases beta-catenin-induced transcriptional activity through GSK3B kinase activity inhibition, reduces N-cadherin level to promote cell cycle progression. May play a role in cleft palate formation and is required for postnatal life through modulation of the activity of GSK3B during development. This is GSK3B-interacting protein from Mus musculus (Mouse).